The chain runs to 322 residues: Sideroflexin-1 (322 aa).

Ser2 carries the N-acetylserine modification. Topologically, residues 2-102 (SGELPPNINI…MSAQVPMNMT (101 aa)) are mitochondrial matrix. The chain crosses the membrane as a helical span at residues 103-120 (ITGCMMTFYRTTPAVLFW). At 121–146 (QWINQSFNAVVNYTNRSGDAPLTVNE) the chain is on the mitochondrial intermembrane side. A helical membrane pass occupies residues 147–167 (LGTAYVSATTGAVATALGLNA). Over 168 to 174 (LTKHVSP) the chain is Mitochondrial matrix. The helical transmembrane segment at 175–195 (LIGRFVPFAAVAAANCINIPL) threads the bilayer. Residues 196–228 (MRQRELRAGIPVTDENGNRLGESANAAKQAITQ) lie on the Mitochondrial intermembrane side of the membrane. Residues 229-249 (VVISRILMAAPGMAIPPFIMN) traverse the membrane as a helical segment. The Mitochondrial matrix segment spans residues 250–266 (TLEKKAFLKRFPWMSAP). A helical membrane pass occupies residues 267 to 287 (IQVGLVGFCLVFATPLCCALF). Over 288 to 322 (PQKSSMSVTSLEAELQAKIRETSPELRRVYFNKGL) the chain is Mitochondrial intermembrane.

Belongs to the sideroflexin family.

The protein resides in the mitochondrion inner membrane. It catalyses the reaction L-serine(in) = L-serine(out). It carries out the reaction L-alanine(in) = L-alanine(out). The catalysed reaction is L-cysteine(in) = L-cysteine(out). Amino acid transporter importing serine, an essential substrate of the mitochondrial branch of the one-carbon pathway, into mitochondria. Mitochondrial serine is then converted to glycine and formate, which exits to the cytosol where it is used to generate the charged folates that serve as one-carbon donors. May also transport other amino acids including alanine and cysteine. The sequence is that of Sideroflexin-1 (SFXN1) from Sus scrofa (Pig).